A 480-amino-acid polypeptide reads, in one-letter code: UDP-glucose 6-dehydrogenase 3 (480 aa).

Residues 8–13 (GAGYVG), aspartate 33, arginine 38, 86–90 (VNTPT), 127–128 (ST), and glutamate 161 each bind NAD(+). Substrate contacts are provided by residues 157–161 (EFLAE), 216–223 (KLAANAFL), and 256–269 (RIGPKFLNSSVGFG). Cysteine 272 acts as the Nucleophile in catalysis. 272-275 (CFQK) is an NAD(+) binding site. Position 334–335 (334–335 (FK)) interacts with substrate. Arginine 342 is an NAD(+) binding site. Residue arginine 447 participates in substrate binding.

It belongs to the UDP-glucose/GDP-mannose dehydrogenase family.

It catalyses the reaction UDP-alpha-D-glucose + 2 NAD(+) + H2O = UDP-alpha-D-glucuronate + 2 NADH + 3 H(+). It participates in nucleotide-sugar biosynthesis; UDP-alpha-D-glucuronate biosynthesis; UDP-alpha-D-glucuronate from UDP-alpha-D-glucose: step 1/1. With respect to regulation, inhibited by UDP-xylose. In terms of biological role, involved in the biosynthesis of UDP-glucuronic acid (UDP-GlcA), providing nucleotide sugars for cell-wall polymers. Required for the formation of cell wall ingrowths on the outer cell walls of nematode-induced syncytia. The chain is UDP-glucose 6-dehydrogenase 3 (UGD3) from Arabidopsis thaliana (Mouse-ear cress).